The sequence spans 235 residues: Leucyl/phenylalanyl-tRNA--protein transferase (235 aa).

Belongs to the L/F-transferase family.

The protein resides in the cytoplasm. It carries out the reaction N-terminal L-lysyl-[protein] + L-leucyl-tRNA(Leu) = N-terminal L-leucyl-L-lysyl-[protein] + tRNA(Leu) + H(+). It catalyses the reaction N-terminal L-arginyl-[protein] + L-leucyl-tRNA(Leu) = N-terminal L-leucyl-L-arginyl-[protein] + tRNA(Leu) + H(+). The enzyme catalyses L-phenylalanyl-tRNA(Phe) + an N-terminal L-alpha-aminoacyl-[protein] = an N-terminal L-phenylalanyl-L-alpha-aminoacyl-[protein] + tRNA(Phe). Its function is as follows. Functions in the N-end rule pathway of protein degradation where it conjugates Leu, Phe and, less efficiently, Met from aminoacyl-tRNAs to the N-termini of proteins containing an N-terminal arginine or lysine. The chain is Leucyl/phenylalanyl-tRNA--protein transferase from Methylococcus capsulatus (strain ATCC 33009 / NCIMB 11132 / Bath).